The chain runs to 350 residues: MVMFMHLMELPREVLLGEDLKDKVSQVAKRLKLGENVLILYGPKTKEIAGKDIEKHLKEFFHVKNLLIKEASMKNVQKALEIIRNENIDWLLGVGGGSIIDVAKLASFKADVPFISFPTTASHDGIASANASIRDLGAKTSIKARPPVAVIADVNIIKTAPYRYLAAGVGDMVSNLTAVKDWELAHRIRGEYFSEYAASLSLMSAKMVIKNADIIRLSNEESVRKVIKALISSGVAMSIAGSSRPASGAEHLFSHALDAIAPKPALHGEQCGVGTIIMAYLHGLNWKKIRETLKRVGAPTNAYELEIDPGFIIEALTIAHTIRPERYTILGKDGLTKEAAEKAAKITGVI.

NAD(+) contacts are provided by residues 97–101 (GSIID) and 119–122 (TTAS). A substrate-binding site is contributed by Asp124. Ser128 is an NAD(+) binding site. Asp171 serves as a coordination point for substrate. Asp171 and His251 together coordinate Zn(2+). Residue His255 coordinates substrate. His267 is a binding site for Zn(2+).

The protein belongs to the glycerol-1-phosphate dehydrogenase family. The cofactor is Zn(2+).

Its subcellular location is the cytoplasm. The enzyme catalyses sn-glycerol 1-phosphate + NAD(+) = dihydroxyacetone phosphate + NADH + H(+). It catalyses the reaction sn-glycerol 1-phosphate + NADP(+) = dihydroxyacetone phosphate + NADPH + H(+). Its pathway is membrane lipid metabolism; glycerophospholipid metabolism. Its function is as follows. Catalyzes the NAD(P)H-dependent reduction of dihydroxyacetonephosphate (DHAP or glycerone phosphate) to glycerol 1-phosphate (G1P). The G1P thus generated is used as the glycerophosphate backbone of phospholipids in the cellular membranes of Archaea. The protein is Glycerol-1-phosphate dehydrogenase [NAD(P)+] of Thermococcus sibiricus (strain DSM 12597 / MM 739).